The sequence spans 358 residues: 3-dehydroquinate synthase (358 aa).

NAD(+)-binding positions include 70 to 75, 104 to 108, 128 to 129, Lys141, Lys150, and 168 to 171; these read DGEKFK, GVVGD, TT, and CLQT. The Zn(2+) site is built by Glu183, His246, and His263.

This sequence belongs to the sugar phosphate cyclases superfamily. Dehydroquinate synthase family. Co(2+) serves as cofactor. It depends on Zn(2+) as a cofactor. NAD(+) is required as a cofactor.

It is found in the cytoplasm. It catalyses the reaction 7-phospho-2-dehydro-3-deoxy-D-arabino-heptonate = 3-dehydroquinate + phosphate. The protein operates within metabolic intermediate biosynthesis; chorismate biosynthesis; chorismate from D-erythrose 4-phosphate and phosphoenolpyruvate: step 2/7. Functionally, catalyzes the conversion of 3-deoxy-D-arabino-heptulosonate 7-phosphate (DAHP) to dehydroquinate (DHQ). This chain is 3-dehydroquinate synthase, found in Shewanella frigidimarina (strain NCIMB 400).